We begin with the raw amino-acid sequence, 168 residues long: Cyclic pyranopterin monophosphate synthase (168 aa).

Substrate is bound by residues 81–83 and 117–118; these read LCH and ME. Residue Asp-132 is part of the active site.

It belongs to the MoaC family. In terms of assembly, homohexamer; trimer of dimers.

It catalyses the reaction (8S)-3',8-cyclo-7,8-dihydroguanosine 5'-triphosphate = cyclic pyranopterin phosphate + diphosphate. It functions in the pathway cofactor biosynthesis; molybdopterin biosynthesis. In terms of biological role, catalyzes the conversion of (8S)-3',8-cyclo-7,8-dihydroguanosine 5'-triphosphate to cyclic pyranopterin monophosphate (cPMP). The chain is Cyclic pyranopterin monophosphate synthase from Deinococcus radiodurans (strain ATCC 13939 / DSM 20539 / JCM 16871 / CCUG 27074 / LMG 4051 / NBRC 15346 / NCIMB 9279 / VKM B-1422 / R1).